The sequence spans 369 residues: 3-dehydroquinate synthase (369 aa).

NAD(+)-binding positions include 71 to 76 (DGECHK), 105 to 109 (GVIND), 129 to 130 (TT), Lys142, Lys151, and 169 to 172 (TLST). Residues Glu184, His247, and His264 each coordinate Zn(2+).

This sequence belongs to the sugar phosphate cyclases superfamily. Dehydroquinate synthase family. Co(2+) is required as a cofactor. Zn(2+) serves as cofactor. Requires NAD(+) as cofactor.

The protein localises to the cytoplasm. The catalysed reaction is 7-phospho-2-dehydro-3-deoxy-D-arabino-heptonate = 3-dehydroquinate + phosphate. Its pathway is metabolic intermediate biosynthesis; chorismate biosynthesis; chorismate from D-erythrose 4-phosphate and phosphoenolpyruvate: step 2/7. Catalyzes the conversion of 3-deoxy-D-arabino-heptulosonate 7-phosphate (DAHP) to dehydroquinate (DHQ). This chain is 3-dehydroquinate synthase, found in Dichelobacter nodosus (strain VCS1703A).